The primary structure comprises 127 residues: Large ribosomal subunit protein eL8 (127 aa).

This sequence belongs to the eukaryotic ribosomal protein eL8 family. Part of the 50S ribosomal subunit. Probably part of the RNase P complex.

It is found in the cytoplasm. Its function is as follows. Multifunctional RNA-binding protein that recognizes the K-turn motif in ribosomal RNA, the RNA component of RNase P, box H/ACA, box C/D and box C'/D' sRNAs. This Hyperthermus butylicus (strain DSM 5456 / JCM 9403 / PLM1-5) protein is Large ribosomal subunit protein eL8.